The primary structure comprises 262 residues: Type III pantothenate kinase (262 aa).

5-12 (DAGNTRSK) contributes to the ATP binding site. Substrate is bound by residues Tyr-102 and 110-113 (GSDR). The active-site Proton acceptor is the Asp-112. Asp-132 contacts K(+). An ATP-binding site is contributed by Thr-135. Thr-190 provides a ligand contact to substrate.

The protein belongs to the type III pantothenate kinase family. Homodimer. The cofactor is NH4(+). Requires K(+) as cofactor.

The protein localises to the cytoplasm. The catalysed reaction is (R)-pantothenate + ATP = (R)-4'-phosphopantothenate + ADP + H(+). Its pathway is cofactor biosynthesis; coenzyme A biosynthesis; CoA from (R)-pantothenate: step 1/5. Catalyzes the phosphorylation of pantothenate (Pan), the first step in CoA biosynthesis. The polypeptide is Type III pantothenate kinase (Idiomarina loihiensis (strain ATCC BAA-735 / DSM 15497 / L2-TR)).